A 949-amino-acid polypeptide reads, in one-letter code: ATPase 6, plasma membrane-type (949 aa).

The Cytoplasmic segment spans residues 1 to 64 (MAADISWDEI…EKVENKFLKF (64 aa)). The helical transmembrane segment at 65 to 84 (LGFMWNPLSWVMEAAAIMAI) threads the bilayer. Over 85–96 (VLANGGGRPPDW) the chain is Extracellular. Residues 97-117 (QDFVGITCLLIINSTISFIEE) form a helical membrane-spanning segment. Topologically, residues 118–246 (NNAGNAAAAL…GHFQKVLTAI (129 aa)) are cytoplasmic. A helical transmembrane segment spans residues 247 to 267 (GNFCICSIGIGMLIEIIIMYP). Residues 268–276 (IQHRKYRDG) are Extracellular-facing. The chain crosses the membrane as a helical span at residues 277 to 294 (IDNLLVLLIGGIPIAMPT). The Cytoplasmic segment spans residues 295 to 645 (VLSVTMAIGS…TSRAIFQRMK (351 aa)). Residue D332 is the 4-aspartylphosphate intermediate of the active site. Residues D590 and D594 each coordinate Mg(2+). A helical transmembrane segment spans residues 646–667 (NYTIYAVSITIRIVLGFMLVAL). Over 668 to 672 (IWEFD) the chain is Extracellular. A helical transmembrane segment spans residues 673–695 (FSPFMVLIIAILNDGTIMTISKD). The Cytoplasmic portion of the chain corresponds to 696-711 (RVKPSPIPDSWKLKEI). Residues 712 to 732 (FATGVVLGTYMALVTVVFFWL) traverse the membrane as a helical segment. Over 733–753 (AHDTTFFSDKFGVRSLQGKDE) the chain is Extracellular. Residues 754 to 774 (ELIAVLYLQVSIISQALIFVT) form a helical membrane-spanning segment. The Cytoplasmic portion of the chain corresponds to 775–786 (RSRSWSFVERPG). The helical transmembrane segment at 787–807 (LLLLIAFFVAQLIATLIATYA) threads the bilayer. The Extracellular segment spans residues 808 to 815 (HWEFARIK). A helical membrane pass occupies residues 816–836 (GCGWGWCGVIWIYSIVTYIPL). Topologically, residues 837 to 949 (DILKFITRYT…IDNLNQHYTV (113 aa)) are cytoplasmic. T883 is subject to Phosphothreonine. Position 931 is a phosphoserine (S931). The interaction with 14-3-3 proteins stretch occupies residues 947-949 (YTV). Residue T948 is modified to Phosphothreonine.

The protein belongs to the cation transport ATPase (P-type) (TC 3.A.3) family. Type IIIA subfamily. In terms of assembly, binds to 14-3-3 proteins. The binding is induced by phosphorylation of Thr-948. Binding to 14-3-3 proteins activates the H(+)-ATPase. Expressed in guard cells.

The protein resides in the membrane. It catalyses the reaction ATP + H2O + H(+)(in) = ADP + phosphate + 2 H(+)(out). Functionally, the plasma membrane H(+) ATPase of plants and fungi generates a proton gradient that drives the active transport of nutrients by H(+)-symport. The resulting external acidification and/or internal alkinization may mediate growth responses. This chain is ATPase 6, plasma membrane-type (AHA6), found in Arabidopsis thaliana (Mouse-ear cress).